Here is a 225-residue protein sequence, read N- to C-terminus: 7-cyano-7-deazaguanine synthase (225 aa).

10–20 (VSGGLDSTTAL) is a binding site for ATP. 4 residues coordinate Zn(2+): C189, C199, C202, and C205.

Belongs to the QueC family. It depends on Zn(2+) as a cofactor.

The catalysed reaction is 7-carboxy-7-deazaguanine + NH4(+) + ATP = 7-cyano-7-deazaguanine + ADP + phosphate + H2O + H(+). It participates in purine metabolism; 7-cyano-7-deazaguanine biosynthesis. In terms of biological role, catalyzes the ATP-dependent conversion of 7-carboxy-7-deazaguanine (CDG) to 7-cyano-7-deazaguanine (preQ(0)). This chain is 7-cyano-7-deazaguanine synthase, found in Saccharophagus degradans (strain 2-40 / ATCC 43961 / DSM 17024).